A 202-amino-acid chain; its full sequence is Small ribosomal subunit protein uS4c (202 aa).

Residues 1-13 (MSRYRGPRMKMIR) are compositionally biased toward basic residues. The segment at 1–41 (MSRYRGPRMKMIRRPGTLPGLTSKTPGTKVGSSDRSTSSKK) is disordered. The segment covering 29–41 (KVGSSDRSTSSKK) has biased composition (low complexity). The S4 RNA-binding domain occupies 90 to 153 (MRLDNTIFRL…KCRLVDRRDM (64 aa)).

The protein belongs to the universal ribosomal protein uS4 family. As to quaternary structure, part of the 30S ribosomal subunit. Contacts protein S5. The interaction surface between S4 and S5 is involved in control of translational fidelity.

The protein localises to the plastid. Functionally, one of the primary rRNA binding proteins, it binds directly to 16S rRNA where it nucleates assembly of the body of the 30S subunit. In terms of biological role, with S5 and S12 plays an important role in translational accuracy. In Aneura mirabilis (Parasitic liverwort), this protein is Small ribosomal subunit protein uS4c (rps4).